We begin with the raw amino-acid sequence, 196 residues long: Molybdenum cofactor guanylyltransferase (196 aa).

GTP contacts are provided by residues 10–12, Lys23, Asn51, Asp69, and Asp99; that span reads LAG. Mg(2+) is bound at residue Asp99.

This sequence belongs to the MobA family. Monomer. Mg(2+) is required as a cofactor.

The protein resides in the cytoplasm. The enzyme catalyses Mo-molybdopterin + GTP + H(+) = Mo-molybdopterin guanine dinucleotide + diphosphate. Its function is as follows. Transfers a GMP moiety from GTP to Mo-molybdopterin (Mo-MPT) cofactor (Moco or molybdenum cofactor) to form Mo-molybdopterin guanine dinucleotide (Mo-MGD) cofactor. This chain is Molybdenum cofactor guanylyltransferase, found in Shewanella loihica (strain ATCC BAA-1088 / PV-4).